A 426-amino-acid chain; its full sequence is Kynureninase (426 aa).

Pyridoxal 5'-phosphate contacts are provided by residues Leu110, Ser111, 138–141 (FPSD), Asp223, His226, and Tyr248. N6-(pyridoxal phosphate)lysine is present on Lys249. The pyridoxal 5'-phosphate site is built by Trp279 and Asn307.

Belongs to the kynureninase family. As to quaternary structure, homodimer. It depends on pyridoxal 5'-phosphate as a cofactor.

The catalysed reaction is L-kynurenine + H2O = anthranilate + L-alanine + H(+). The enzyme catalyses 3-hydroxy-L-kynurenine + H2O = 3-hydroxyanthranilate + L-alanine + H(+). Its pathway is amino-acid degradation; L-kynurenine degradation; L-alanine and anthranilate from L-kynurenine: step 1/1. It functions in the pathway cofactor biosynthesis; NAD(+) biosynthesis; quinolinate from L-kynurenine: step 2/3. Catalyzes the cleavage of L-kynurenine (L-Kyn) and L-3-hydroxykynurenine (L-3OHKyn) into anthranilic acid (AA) and 3-hydroxyanthranilic acid (3-OHAA), respectively. The chain is Kynureninase from Myxococcus xanthus (strain DK1622).